A 332-amino-acid chain; its full sequence is Holliday junction branch migration complex subunit RuvB (332 aa).

Positions Met-1–Tyr-181 are large ATPase domain (RuvB-L). Residues Leu-20, Arg-21, Gly-62, Lys-65, Thr-66, Thr-67, Glu-128–Phe-130, Arg-171, Tyr-181, and Arg-218 each bind ATP. Residue Thr-66 coordinates Mg(2+). Residues Glu-182 to Asp-252 are small ATPAse domain (RuvB-S). Residues His-255–Lys-332 form a head domain (RuvB-H) region. 4 residues coordinate DNA: Arg-291, Arg-310, Arg-312, and Arg-315.

Belongs to the RuvB family. Homohexamer. Forms an RuvA(8)-RuvB(12)-Holliday junction (HJ) complex. HJ DNA is sandwiched between 2 RuvA tetramers; dsDNA enters through RuvA and exits via RuvB. An RuvB hexamer assembles on each DNA strand where it exits the tetramer. Each RuvB hexamer is contacted by two RuvA subunits (via domain III) on 2 adjacent RuvB subunits; this complex drives branch migration. In the full resolvosome a probable DNA-RuvA(4)-RuvB(12)-RuvC(2) complex forms which resolves the HJ.

Its subcellular location is the cytoplasm. The enzyme catalyses ATP + H2O = ADP + phosphate + H(+). Functionally, the RuvA-RuvB-RuvC complex processes Holliday junction (HJ) DNA during genetic recombination and DNA repair, while the RuvA-RuvB complex plays an important role in the rescue of blocked DNA replication forks via replication fork reversal (RFR). RuvA specifically binds to HJ cruciform DNA, conferring on it an open structure. The RuvB hexamer acts as an ATP-dependent pump, pulling dsDNA into and through the RuvAB complex. RuvB forms 2 homohexamers on either side of HJ DNA bound by 1 or 2 RuvA tetramers; 4 subunits per hexamer contact DNA at a time. Coordinated motions by a converter formed by DNA-disengaged RuvB subunits stimulates ATP hydrolysis and nucleotide exchange. Immobilization of the converter enables RuvB to convert the ATP-contained energy into a lever motion, pulling 2 nucleotides of DNA out of the RuvA tetramer per ATP hydrolyzed, thus driving DNA branch migration. The RuvB motors rotate together with the DNA substrate, which together with the progressing nucleotide cycle form the mechanistic basis for DNA recombination by continuous HJ branch migration. Branch migration allows RuvC to scan DNA until it finds its consensus sequence, where it cleaves and resolves cruciform DNA. In Streptococcus agalactiae serotype V (strain ATCC BAA-611 / 2603 V/R), this protein is Holliday junction branch migration complex subunit RuvB.